The chain runs to 109 residues: Flagellar transcriptional regulator FlhD (109 aa).

Belongs to the FlhD family. As to quaternary structure, homodimer; disulfide-linked. Forms a heterohexamer composed of two FlhC and four FlhD subunits. Each FlhC binds a FlhD dimer, forming a heterotrimer, and a hexamer assembles by dimerization of two heterotrimers.

It localises to the cytoplasm. Its function is as follows. Functions in complex with FlhC as a master transcriptional regulator that regulates transcription of several flagellar and non-flagellar operons by binding to their promoter region. Activates expression of class 2 flagellar genes, including fliA, which is a flagellum-specific sigma factor that turns on the class 3 genes. Also regulates genes whose products function in a variety of physiological pathways. This Acidovorax sp. (strain JS42) protein is Flagellar transcriptional regulator FlhD.